Reading from the N-terminus, the 313-residue chain is Porphobilinogen deaminase (313 aa).

S-(dipyrrolylmethanemethyl)cysteine is present on cysteine 241.

The protein belongs to the HMBS family. Monomer. Dipyrromethane is required as a cofactor.

The catalysed reaction is 4 porphobilinogen + H2O = hydroxymethylbilane + 4 NH4(+). The protein operates within porphyrin-containing compound metabolism; protoporphyrin-IX biosynthesis; coproporphyrinogen-III from 5-aminolevulinate: step 2/4. Its pathway is porphyrin-containing compound metabolism; chlorophyll biosynthesis. Its function is as follows. Tetrapolymerization of the monopyrrole PBG into the hydroxymethylbilane pre-uroporphyrinogen in several discrete steps. This Chlorobium limicola (strain DSM 245 / NBRC 103803 / 6330) protein is Porphobilinogen deaminase.